The primary structure comprises 795 residues: Delta-1-pyrroline-5-carboxylate synthase (795 aa).

The interval 1 to 361 (MLSQVYRCGF…FFSEVKPAGP (361 aa)) is glutamate 5-kinase. Substrate is bound by residues S117, D223, and N246. ATP contacts are provided by residues 266 to 267 (SD) and 305 to 311 (MGGMEAK). K311, K347, and K550 each carry N6-succinyllysine. Residues 362–795 (TVEQQGEMAR…NLPIPQRNTN (434 aa)) are gamma-glutamyl phosphate reductase.

In the N-terminal section; belongs to the glutamate 5-kinase family. It in the C-terminal section; belongs to the gamma-glutamyl phosphate reductase family. In terms of assembly, can form homodimers/multimers.

The protein resides in the mitochondrion. It localises to the mitochondrion matrix. It carries out the reaction L-glutamate + ATP = L-glutamyl 5-phosphate + ADP. The enzyme catalyses L-glutamate 5-semialdehyde + phosphate + NADP(+) = L-glutamyl 5-phosphate + NADPH + H(+). The protein operates within amino-acid biosynthesis; L-proline biosynthesis; L-glutamate 5-semialdehyde from L-glutamate: step 1/2. It functions in the pathway amino-acid biosynthesis; L-proline biosynthesis; L-glutamate 5-semialdehyde from L-glutamate: step 2/2. With respect to regulation, isoform Short: Inhibited by L-ornithine with a Ki of approximately 0.25 mm. Isoform Long: Insensitive to ornithine inhibition. This is due to the two amino acid insert which abolishes feedback inhibition of P5CS activity by L-ornithine. Bifunctional enzyme that converts glutamate to glutamate 5-semialdehyde, an intermediate in the biosynthesis of proline, ornithine and arginine. The chain is Delta-1-pyrroline-5-carboxylate synthase (ALDH18A1) from Homo sapiens (Human).